Reading from the N-terminus, the 233-residue chain is Small ribosomal subunit protein uS2 (233 aa).

It belongs to the universal ribosomal protein uS2 family.

This is Small ribosomal subunit protein uS2 from Clostridium novyi (strain NT).